Consider the following 418-residue polypeptide: UDP-N-acetylglucosamine 1-carboxyvinyltransferase (418 aa).

Lys22–Asn23 contacts phosphoenolpyruvate. Arg92 serves as a coordination point for UDP-N-acetyl-alpha-D-glucosamine. The active-site Proton donor is Cys116. Cys116 carries the 2-(S-cysteinyl)pyruvic acid O-phosphothioketal modification. UDP-N-acetyl-alpha-D-glucosamine contacts are provided by residues Arg121 to Leu125, Asp305, and Leu327.

Belongs to the EPSP synthase family. MurA subfamily.

The protein localises to the cytoplasm. The enzyme catalyses phosphoenolpyruvate + UDP-N-acetyl-alpha-D-glucosamine = UDP-N-acetyl-3-O-(1-carboxyvinyl)-alpha-D-glucosamine + phosphate. Its pathway is cell wall biogenesis; peptidoglycan biosynthesis. In terms of biological role, cell wall formation. Adds enolpyruvyl to UDP-N-acetylglucosamine. This is UDP-N-acetylglucosamine 1-carboxyvinyltransferase from Campylobacter jejuni (strain RM1221).